Consider the following 84-residue polypeptide: Small ribosomal subunit protein bS18 (84 aa).

This sequence belongs to the bacterial ribosomal protein bS18 family. As to quaternary structure, part of the 30S ribosomal subunit. Forms a tight heterodimer with protein bS6.

Functionally, binds as a heterodimer with protein bS6 to the central domain of the 16S rRNA, where it helps stabilize the platform of the 30S subunit. In Dictyoglomus turgidum (strain DSM 6724 / Z-1310), this protein is Small ribosomal subunit protein bS18.